The following is a 147-amino-acid chain: Leghemoglobin-1 (147 aa).

One can recognise a Globin domain in the interval Ser2–Ser147. Residues Tyr25 and Tyr30 each carry the nitrated tyrosine modification. Position 45 (Ser45) interacts with heme b. Residue Ser45 is modified to Phosphoserine. His62 lines the O2 pocket. Heme b-binding residues include Lys65, His94, and Lys97. Tyr135 carries the nitrated tyrosine modification.

The protein belongs to the plant globin family. As to quaternary structure, monomer. In terms of processing, nitrated in effective nodules and particularly in hypoxic conditions; this mechanism may play a protective role in the symbiosis by buffering toxic peroxynitrite NO(2)(-). Nitration level decrease during nodule senescence. Post-translationally, phosphorylation at Ser-45 disrupts the molecular environment of its porphyrin ring oxygen binding pocket, thus leading to a reduced oxygen consumption and to the delivery of oxygen O(2) to symbiosomes. In terms of tissue distribution, root nodules.

It is found in the cytoplasm. The protein localises to the cytosol. It localises to the nucleus. Functionally, leghemoglobin that reversibly binds oxygen O(2) through a pentacoordinated heme iron. In root nodules, facilitates the diffusion of oxygen to the bacteroids while preventing the bacterial nitrogenase from being inactivated by buffering dioxygen, nitric oxide and carbon monoxide, and promoting the formation of reactive oxygen species (ROS, e.g. H(2)O(2)). This role is essential for symbiotic nitrogen fixation (SNF). The sequence is that of Leghemoglobin-1 from Medicago sativa (Alfalfa).